Reading from the N-terminus, the 20-residue chain is QELASFHSVSKGFMGECGFR.

Lysine 11 is modified (N6-(pyridoxal phosphate)lysine). Lysine 11 carries N-linked (Glc) (glycation) lysine; in vitro glycosylation.

This sequence belongs to the class-I pyridoxal-phosphate-dependent aminotransferase family. Alanine aminotransferase subfamily. As to quaternary structure, homodimer. Requires pyridoxal 5'-phosphate as cofactor. In terms of processing, glycation of Lys-11 inactivates the enzyme.

It is found in the cytoplasm. The enzyme catalyses L-alanine + 2-oxoglutarate = pyruvate + L-glutamate. It functions in the pathway amino-acid degradation; L-alanine degradation via transaminase pathway; pyruvate from L-alanine: step 1/1. Its function is as follows. Catalyzes the reversible transamination between alanine and 2-oxoglutarate to form pyruvate and glutamate. Participates in cellular nitrogen metabolism and also in liver gluconeogenesis starting with precursors transported from skeletal muscles. The protein is Alanine aminotransferase 1 (GPT) of Sus scrofa (Pig).